Reading from the N-terminus, the 525-residue chain is MCGILAVLGCSDDSQAKRVRVLELSRRLKHRGPDWSGLDHHGDCYLAHQRLAIIDPASGDQPLYNEDKTIIVTVNGEIYNHEELRKGLPGHTFRTGSDCEVIAHLYEEHGESFIHMLDGIFSFVLLDSRNNSFVAARDAIGVTPLYIGWGLDGSVWISSEMKGLNDDCEHFKFFPPGHLYSSKEGSFKRWYNPPWFSEVIPSVPFDPLALRKAFEDAVIKRLMTDVPFGVLLSGGLDSSLVASVTARYLEGTKAAELWGTQLHSFCVGLEGSPDLKAAKEVANFLGTIHHEFHFTVQDGIDAIEDVIYHVETYDVTTIRASTPMFLMSRKIKSLGVKMVISGEGSDEIFGGYLYFHKAPNKEELHLETCHKIKALHQYDCLRANKATSAWGLEARVPFLDKEFVNVAMSIDPEWKMIKPDIGRIEKWILRRAFDDEENPYLPKHILYRQKEQFSDGVGYSWIDGLKAHSALHVTDKMMLNAAHIYPHNTPTTKEAYYYRMIFERFFPQIDSPWRSKCGLQHSKSY.

Residue Cys-2 is the For GATase activity of the active site. The region spanning 2 to 185 is the Glutamine amidotransferase type-2 domain; that stretch reads CGILAVLGCS…PGHLYSSKEG (184 aa). Residues 50-54, 75-77, and Asp-98 each bind L-glutamine; these read RLAII and NGE. An Asparagine synthetase domain is found at 193 to 517; that stretch reads PPWFSEVIPS…QIDSPWRSKC (325 aa). ATP-binding positions include Leu-231, Val-267, and 341-342; that span reads SG.

It catalyses the reaction L-aspartate + L-glutamine + ATP + H2O = L-asparagine + L-glutamate + AMP + diphosphate + H(+). It participates in amino-acid biosynthesis; L-asparagine biosynthesis; L-asparagine from L-aspartate (L-Gln route): step 1/1. In terms of biological role, could play a role in remobilization of nitrogen in flowers during senescence. The sequence is that of Asparagine synthetase [glutamine-hydrolyzing] (AND1) from Sandersonia aurantiaca (Christmas-bells).